We begin with the raw amino-acid sequence, 105 residues long: Large ribosomal subunit protein bL21 (105 aa).

This sequence belongs to the bacterial ribosomal protein bL21 family. As to quaternary structure, part of the 50S ribosomal subunit. Contacts protein L20.

Its function is as follows. This protein binds to 23S rRNA in the presence of protein L20. The sequence is that of Large ribosomal subunit protein bL21 from Rickettsia typhi (strain ATCC VR-144 / Wilmington).